Here is a 195-residue protein sequence, read N- to C-terminus: Imidazoleglycerol-phosphate dehydratase (195 aa).

This sequence belongs to the imidazoleglycerol-phosphate dehydratase family.

It localises to the cytoplasm. It catalyses the reaction D-erythro-1-(imidazol-4-yl)glycerol 3-phosphate = 3-(imidazol-4-yl)-2-oxopropyl phosphate + H2O. The protein operates within amino-acid biosynthesis; L-histidine biosynthesis; L-histidine from 5-phospho-alpha-D-ribose 1-diphosphate: step 6/9. This chain is Imidazoleglycerol-phosphate dehydratase, found in Parafrankia sp. (strain EAN1pec).